The sequence spans 106 residues: uncharacterized protein (106 aa).

The interval 28–68 (SSANEPKKLPNKKLVSTKSHTQVNREKSKNKDTYEDYSDSN) is disordered. Basic and acidic residues predominate over residues 50–61 (VNREKSKNKDTY).

This is an uncharacterized protein from Acanthamoeba polyphaga (Amoeba).